A 657-amino-acid chain; its full sequence is uncharacterized protein (657 aa).

At Ser-114 the chain carries Phosphoserine. Disordered regions lie at residues 142-216, 228-248, 291-312, 335-354, and 399-522; these read LASQ…SDEE, SSRE…EEEE, STRS…SHTP, SSPG…EGAD, and AEAS…SGRH. The segment covering 143–169 has biased composition (polar residues); the sequence is ASQNTDKTSQNQARELPVTENNAQNAK. Residues 190 to 206 are compositionally biased toward basic and acidic residues; that stretch reads AGKERTLQTPKQKEPAR. Residue Ser-213 is modified to Phosphoserine. Polar residues-rich tracts occupy residues 234–243 and 301–312; these read TNQGFSSANV and SHVSSDTASHTP. Acidic residues predominate over residues 343–354; it reads ETVDEPVSEGAD. Residues 437-451 show a composition bias toward low complexity; sequence SASSASAIQQDSTSS. A compositionally biased stretch (polar residues) spans 462–484; sequence NTVSSAYSEDFENSPSLTASEPT. The span at 485-495 shows a compositional bias: basic and acidic residues; that stretch reads AHSKESLDRTL. Polar residues predominate over residues 499-513; the sequence is SESSSSVKTDLPQTA.

This is an uncharacterized protein from Homo sapiens (Human).